Consider the following 231-residue polypeptide: Large ribosomal subunit protein uL3 (231 aa).

An N5-methylglutamine modification is found at glutamine 151.

This sequence belongs to the universal ribosomal protein uL3 family. In terms of assembly, part of the 50S ribosomal subunit. Forms a cluster with proteins L14 and L19. In terms of processing, methylated by PrmB.

Functionally, one of the primary rRNA binding proteins, it binds directly near the 3'-end of the 23S rRNA, where it nucleates assembly of the 50S subunit. The sequence is that of Large ribosomal subunit protein uL3 from Ehrlichia canis (strain Jake).